The chain runs to 88 residues: Sapecin-B (88 aa).

Positions 1–24 are cleaved as a signal peptide; sequence MKFLTSLLLLFVVVMVSAVNLSMA. A propeptide spanning residues 25-54 is cleaved from the precursor; it reads KESANQLTERLQELDGAAIQEPAELNRHKR. 3 disulfide bridges follow: cysteine 57-cysteine 78, cysteine 64-cysteine 84, and cysteine 68-cysteine 86.

It belongs to the invertebrate defensin family. Type 1 subfamily. Hemocytes and fat body.

The protein resides in the secreted. Its function is as follows. Sapecins, which are potent bactericidal proteins, are produced in response to injury. Sapecin B is cytotoxic to Gram-positive bacteria. The sequence is that of Sapecin-B from Sarcophaga peregrina (Flesh fly).